We begin with the raw amino-acid sequence, 476 residues long: Doublecortin domain-containing protein 2 (476 aa).

Doublecortin domains follow at residues 17–100 (KSVL…LNYL) and 139–221 (CTIF…LPYS). Residues 234–476 (FGQKASSLPP…QQNKDYAAVA (243 aa)) are disordered. Polar residues predominate over residues 261–272 (STVGSSDNSSPQ). Phosphoserine is present on serine 270. The segment covering 279 to 289 (KKEDVNSEKLT) has biased composition (basic and acidic residues). Positions 296 to 306 (KLKNSQETIPN) are enriched in polar residues. The segment covering 354-366 (EKANKDAEQKEDF) has biased composition (basic and acidic residues). Over residues 415–426 (ELQQVNNELQLV) the composition is skewed to low complexity. Over residues 446–455 (DPQRPPRPEV) the composition is skewed to basic and acidic residues.

In terms of assembly, interacts with DVL1, DVL2 and DVL3. In terms of tissue distribution, ubiquitously expressed. In brain, highly expressed in the entorhinal cortex, inferior temporal cortex, medial temporal cortex, hypothalamus, amygdala and hippocampus. Expressed in liver by cholangiocytes, the epithelial cells of the bile ducts (at protein level).

The protein localises to the cell projection. Its subcellular location is the cilium. It localises to the cytoplasm. The protein resides in the cytoskeleton. It is found in the cilium axoneme. The protein localises to the kinocilium. In terms of biological role, protein that plays a role in the inhibition of canonical Wnt signaling pathway. May be involved in neuronal migration during development of the cerebral neocortex. Involved in the control of ciliogenesis and ciliary length. The protein is Doublecortin domain-containing protein 2 (DCDC2) of Homo sapiens (Human).